A 691-amino-acid polypeptide reads, in one-letter code: Elongation factor G (691 aa).

The region spanning 8–282 is the tr-type G domain; sequence HMVRNIGIAA…AVVDYLPAPD (275 aa). GTP is bound by residues 17–24, 81–85, and 135–138; these read AHIDAGKT, DTPGH, and NKMD.

Belongs to the TRAFAC class translation factor GTPase superfamily. Classic translation factor GTPase family. EF-G/EF-2 subfamily.

Its subcellular location is the cytoplasm. Catalyzes the GTP-dependent ribosomal translocation step during translation elongation. During this step, the ribosome changes from the pre-translocational (PRE) to the post-translocational (POST) state as the newly formed A-site-bound peptidyl-tRNA and P-site-bound deacylated tRNA move to the P and E sites, respectively. Catalyzes the coordinated movement of the two tRNA molecules, the mRNA and conformational changes in the ribosome. The polypeptide is Elongation factor G (Campylobacter hominis (strain ATCC BAA-381 / DSM 21671 / CCUG 45161 / LMG 19568 / NCTC 13146 / CH001A)).